We begin with the raw amino-acid sequence, 413 residues long: MKNKRRTYFFQFAVLAVVIATAYFAWNYFKASTISEEKSAQASKSLQDLKYLLQPPVQVATAKIQSVPHYLGGLGTVQAANTVTVTSLVAGQLTALHFDEGQFVKQGDLLAEIDPRSFQIQLAKVQGQYAKDQATLANSRQDLVRYQQLAKNKSISQQDLDKQISTVRQYEALLKADQSSIDDARLQLTYSRITAPISGRVGLKKIDVGNYISAGGGTPLVIITQVDPIDVLFALPENDISAVLKAQKNNKDVVVTAWDRNNQQQLAQGKLLSIDNLIDVTTGTIKMKARFDNQNNVLFPNQFVNIQIKVNTLENAIVIPNAALQMSSEGHYVWKVDKENKVNKRKVTIGLQNAQLVVISKGLATGDRVVTDGTDALTEGTGITIVKPLKSESANTYDQMDKSKPSNSKVENT.

The first 25 residues, 1-25 (MKNKRRTYFFQFAVLAVVIATAYFA), serve as a signal peptide directing secretion. Residues 394–413 (ANTYDQMDKSKPSNSKVENT) are disordered.

This sequence belongs to the membrane fusion protein (MFP) (TC 8.A.1) family. As to quaternary structure, part of a tripartite efflux system composed of MdtA, MdtB and MdtC.

The protein localises to the cell inner membrane. In Xenorhabdus bovienii (strain SS-2004) (Xenorhabdus nematophila subsp. bovienii), this protein is Multidrug resistance protein MdtA.